A 131-amino-acid chain; its full sequence is Large ribosomal subunit protein bL19 (131 aa).

It belongs to the bacterial ribosomal protein bL19 family.

This protein is located at the 30S-50S ribosomal subunit interface and may play a role in the structure and function of the aminoacyl-tRNA binding site. The protein is Large ribosomal subunit protein bL19 of Rhodopseudomonas palustris (strain HaA2).